The primary structure comprises 167 residues: NAD(P)H-quinone oxidoreductase subunit I, chloroplastic (167 aa).

4Fe-4S ferredoxin-type domains lie at 55–84 (GRIH…VDWK) and 95–124 (LNYS…MTEE). [4Fe-4S] cluster contacts are provided by cysteine 64, cysteine 67, cysteine 70, cysteine 74, cysteine 104, cysteine 107, cysteine 110, and cysteine 114.

It belongs to the complex I 23 kDa subunit family. NDH is composed of at least 16 different subunits, 5 of which are encoded in the nucleus. It depends on [4Fe-4S] cluster as a cofactor.

The protein localises to the plastid. The protein resides in the chloroplast thylakoid membrane. The enzyme catalyses a plastoquinone + NADH + (n+1) H(+)(in) = a plastoquinol + NAD(+) + n H(+)(out). The catalysed reaction is a plastoquinone + NADPH + (n+1) H(+)(in) = a plastoquinol + NADP(+) + n H(+)(out). In terms of biological role, NDH shuttles electrons from NAD(P)H:plastoquinone, via FMN and iron-sulfur (Fe-S) centers, to quinones in the photosynthetic chain and possibly in a chloroplast respiratory chain. The immediate electron acceptor for the enzyme in this species is believed to be plastoquinone. Couples the redox reaction to proton translocation, and thus conserves the redox energy in a proton gradient. This Solanum tuberosum (Potato) protein is NAD(P)H-quinone oxidoreductase subunit I, chloroplastic.